The primary structure comprises 124 residues: Late embryogenesis abundant protein 37 (124 aa).

The N-terminal 35 residues, 1–35, are a transit peptide targeting the mitochondrion; that stretch reads MSQSLFNLKSLSRSINNTIRMRRYIVITKASQRAY.

Belongs to the LEA type 3 family.

The protein resides in the mitochondrion. In Arabidopsis thaliana (Mouse-ear cress), this protein is Late embryogenesis abundant protein 37.